The following is a 35-amino-acid chain: Photosystem II reaction center protein T (35 aa).

A helical transmembrane segment spans residues 3 to 23 (ALVYTFLLVGTLGIIFFAIFF).

This sequence belongs to the PsbT family. In terms of assembly, PSII is composed of 1 copy each of membrane proteins PsbA, PsbB, PsbC, PsbD, PsbE, PsbF, PsbH, PsbI, PsbJ, PsbK, PsbL, PsbM, PsbT, PsbY, PsbZ, Psb30/Ycf12, at least 3 peripheral proteins of the oxygen-evolving complex and a large number of cofactors. It forms dimeric complexes.

The protein localises to the plastid. It is found in the chloroplast thylakoid membrane. In terms of biological role, found at the monomer-monomer interface of the photosystem II (PS II) dimer, plays a role in assembly and dimerization of PSII. PSII is a light-driven water plastoquinone oxidoreductase, using light energy to abstract electrons from H(2)O, generating a proton gradient subsequently used for ATP formation. This is Photosystem II reaction center protein T from Marchantia polymorpha (Common liverwort).